The following is a 383-amino-acid chain: Serine protease 23 (383 aa).

The signal sequence occupies residues 1-19 (MAGIPGLLFLLFLLLCAVG). The N-linked (GlcNAc...) asparagine glycan is linked to Asn93. The interval 108–127 (SSGGGAQHRDSGSSGKSRRK) is disordered. Ser109 bears the Phosphoserine; by FAM20C mark. A disulfide bridge links Cys160 with Cys176. His175 (charge relay system) is an active-site residue. Residue Asn207 is glycosylated (N-linked (GlcNAc...) asparagine). Residues Asp240 and Ser316 each act as charge relay system in the active site.

The protein belongs to the peptidase S1 family.

It is found in the secreted. The polypeptide is Serine protease 23 (PRSS23) (Macaca mulatta (Rhesus macaque)).